The following is a 273-amino-acid chain: 4-hydroxy-tetrahydrodipicolinate reductase (273 aa).

NAD(+) contacts are provided by residues 8–13 (GCAGNM), E34, 102–104 (GTT), and 128–131 (SPNM). The active-site Proton donor/acceptor is the H161. (S)-2,3,4,5-tetrahydrodipicolinate is bound at residue H162. K165 functions as the Proton donor in the catalytic mechanism. 171–172 (GT) provides a ligand contact to (S)-2,3,4,5-tetrahydrodipicolinate.

This sequence belongs to the DapB family.

The protein localises to the cytoplasm. The enzyme catalyses (S)-2,3,4,5-tetrahydrodipicolinate + NAD(+) + H2O = (2S,4S)-4-hydroxy-2,3,4,5-tetrahydrodipicolinate + NADH + H(+). It carries out the reaction (S)-2,3,4,5-tetrahydrodipicolinate + NADP(+) + H2O = (2S,4S)-4-hydroxy-2,3,4,5-tetrahydrodipicolinate + NADPH + H(+). It participates in amino-acid biosynthesis; L-lysine biosynthesis via DAP pathway; (S)-tetrahydrodipicolinate from L-aspartate: step 4/4. Catalyzes the conversion of 4-hydroxy-tetrahydrodipicolinate (HTPA) to tetrahydrodipicolinate. This Methanosphaera stadtmanae (strain ATCC 43021 / DSM 3091 / JCM 11832 / MCB-3) protein is 4-hydroxy-tetrahydrodipicolinate reductase.